A 479-amino-acid polypeptide reads, in one-letter code: G-rich sequence factor 1 (479 aa).

The transit peptide at 1–116 directs the protein to the mitochondrion; the sequence is MAGTRWVLGA…AAAAGPARGY (116 aa). 2 consecutive RRM domains span residues 149 to 245 and 249 to 325; these read YLIR…PSPV and GVVR…PSRR. Ser-243 carries the phosphoserine modification. Ser-334 carries the phosphoserine modification. One can recognise an RRM 3 domain in the interval 400–479; that stretch reads HFVHMRGLPF…LFLNSCPKGK (80 aa).

As to quaternary structure, monomer. Found in a complex with DDX28, DHX30, FASTKD2 and FASTKD5. Interacts with the mitochondrial RNase P complex subunit TRMT10C/MRPP1. Interacts with the 2 components of the mitochondrial degradosome complex, PNPT1 and SUPV3L1, in an RNA-dependent manner.

It is found in the mitochondrion matrix. Functionally, regulator of post-transcriptional mitochondrial gene expression, required for assembly of the mitochondrial ribosome and for recruitment of mRNA and lncRNA. Binds RNAs containing the 14 base G-rich element. Preferentially binds RNAs transcribed from three contiguous genes on the light strand of mtDNA, the ND6 mRNA, and the long non-coding RNAs for MT-CYB and MT-ND5, each of which contains multiple consensus binding sequences. Involved in the degradosome-mediated decay of non-coding mitochondrial transcripts (MT-ncRNA) and tRNA-like molecules. Acts by unwinding G-quadruplex RNA structures in MT-ncRNA, thus facilitating their degradation by the degradosome. G-quadruplexes (G4) are non-canonical 4 stranded structures formed by transcripts from the light strand of mtDNA. This chain is G-rich sequence factor 1 (Grsf1), found in Mus musculus (Mouse).